The chain runs to 348 residues: ECA polysaccharide chain length modulation protein (348 aa).

Over 1–30 (MTQPMPGKPAEDAENELDIRGLFRTLWAGK) the chain is Cytoplasmic. The helical transmembrane segment at 31 to 51 (LWIIGMGLAFALIALAYTFFA) threads the bilayer. At 52 to 322 (RQEWSSTAIT…EPVKRDSPRR (271 aa)) the chain is on the periplasmic side. Residues 323–343 (AFLMIMWGIVGGLIGAGVALT) traverse the membrane as a helical segment. Residues 344–348 (RRCSK) lie on the Cytoplasmic side of the membrane.

The protein belongs to the WzzB/Cld/Rol family. As to quaternary structure, homooctamer. Probably part of a complex composed of WzxE, WzyE and WzzE.

The protein resides in the cell inner membrane. It participates in bacterial outer membrane biogenesis; enterobacterial common antigen biosynthesis. In terms of biological role, modulates the polysaccharide chain length of enterobacterial common antigen (ECA). The protein is ECA polysaccharide chain length modulation protein of Escherichia coli O157:H7.